A 184-amino-acid chain; its full sequence is MKIAQEIRAGNVIMHGKDPMVVLKTEYARGGRGAATVRMKLKSLIANFGTEIVLRADDKIDNVILDKKECTYSYFADPMYVCMDAEYNQYEVEAGNMGDALNYLEDGMALEVVFYDGKAISVELPTSVEREITWTEPAVKGDTSGKVMKPAKIATGFEVPVPLFVAQGDRIEIDTRTGEYRRRV.

Belongs to the elongation factor P family.

The protein resides in the cytoplasm. It functions in the pathway protein biosynthesis; polypeptide chain elongation. In terms of biological role, involved in peptide bond synthesis. Stimulates efficient translation and peptide-bond synthesis on native or reconstituted 70S ribosomes in vitro. Probably functions indirectly by altering the affinity of the ribosome for aminoacyl-tRNA, thus increasing their reactivity as acceptors for peptidyl transferase. The polypeptide is Elongation factor P (Verminephrobacter eiseniae (strain EF01-2)).